The chain runs to 63 residues: Keratin-associated protein 8-1 (63 aa).

Residues 12-54 (PGCYWGSYGYPLGYSVGCGYGSTYSPVGYGFGYGYNGCGAFGY) are 12 X 2 AA repeats of G-[YCGS].

Belongs to the KRTAP type 8 family. In terms of assembly, interacts with hair keratins. Is essentially restricted to only one vertical half of the hair forming compartment and in beard hairs is absent from the central medulla.

Its function is as follows. In the hair cortex, hair keratin intermediate filaments are embedded in an interfilamentous matrix, consisting of hair keratin-associated proteins (KRTAP), which are essential for the formation of a rigid and resistant hair shaft through their extensive disulfide bond cross-linking with abundant cysteine residues of hair keratins. The matrix proteins include the high-sulfur and high-glycine-tyrosine keratins. This Homo sapiens (Human) protein is Keratin-associated protein 8-1 (KRTAP8-1).